The following is a 357-amino-acid chain: Holliday junction branch migration complex subunit RuvB (357 aa).

The tract at residues 1-27 is disordered; it reads MGRFDDAGAQDAEPDDRDVSPALTVGE. A large ATPase domain (RuvB-L) region spans residues 1–195; that stretch reads MGRFDDAGAQ…FGFTAHMDFY (195 aa). ATP-binding positions include L34, R35, G76, K79, T80, S81, 142–144, R185, Y195, and R232; that span reads EDF. A Mg(2+)-binding site is contributed by T80. Residues 196–266 form a small ATPAse domain (RuvB-S) region; that stretch reads EPAELERVLA…IAKAALEVYD (71 aa). A head domain (RuvB-H) region spans residues 269–357; the sequence is ELGLDRLDRA…TGLGQTGLFD (89 aa). Positions 324 and 329 each coordinate DNA.

This sequence belongs to the RuvB family. In terms of assembly, homohexamer. Forms an RuvA(8)-RuvB(12)-Holliday junction (HJ) complex. HJ DNA is sandwiched between 2 RuvA tetramers; dsDNA enters through RuvA and exits via RuvB. An RuvB hexamer assembles on each DNA strand where it exits the tetramer. Each RuvB hexamer is contacted by two RuvA subunits (via domain III) on 2 adjacent RuvB subunits; this complex drives branch migration. In the full resolvosome a probable DNA-RuvA(4)-RuvB(12)-RuvC(2) complex forms which resolves the HJ.

Its subcellular location is the cytoplasm. It catalyses the reaction ATP + H2O = ADP + phosphate + H(+). Its function is as follows. The RuvA-RuvB-RuvC complex processes Holliday junction (HJ) DNA during genetic recombination and DNA repair, while the RuvA-RuvB complex plays an important role in the rescue of blocked DNA replication forks via replication fork reversal (RFR). RuvA specifically binds to HJ cruciform DNA, conferring on it an open structure. The RuvB hexamer acts as an ATP-dependent pump, pulling dsDNA into and through the RuvAB complex. RuvB forms 2 homohexamers on either side of HJ DNA bound by 1 or 2 RuvA tetramers; 4 subunits per hexamer contact DNA at a time. Coordinated motions by a converter formed by DNA-disengaged RuvB subunits stimulates ATP hydrolysis and nucleotide exchange. Immobilization of the converter enables RuvB to convert the ATP-contained energy into a lever motion, pulling 2 nucleotides of DNA out of the RuvA tetramer per ATP hydrolyzed, thus driving DNA branch migration. The RuvB motors rotate together with the DNA substrate, which together with the progressing nucleotide cycle form the mechanistic basis for DNA recombination by continuous HJ branch migration. Branch migration allows RuvC to scan DNA until it finds its consensus sequence, where it cleaves and resolves cruciform DNA. This Mycobacterium sp. (strain JLS) protein is Holliday junction branch migration complex subunit RuvB.